The chain runs to 824 residues: Leucine--tRNA ligase (824 aa).

The 'HIGH' region motif lies at 42–52 (PYPSGRIHMGH). Positions 581–585 (KMSKS) match the 'KMSKS' region motif. K584 is an ATP binding site.

It belongs to the class-I aminoacyl-tRNA synthetase family.

It localises to the cytoplasm. It catalyses the reaction tRNA(Leu) + L-leucine + ATP = L-leucyl-tRNA(Leu) + AMP + diphosphate. This Geobacter metallireducens (strain ATCC 53774 / DSM 7210 / GS-15) protein is Leucine--tRNA ligase.